The following is a 309-amino-acid chain: Fe-S cluster assembly protein dre2 (309 aa).

The N-terminal SAM-like domain stretch occupies residues 1-132; sequence MTTTIVLASP…LRRPAQVEAV (132 aa). The linker stretch occupies residues 133-195; the sequence is PLKLSTKKSA…DALVSDEETQ (63 aa). [2Fe-2S] cluster contacts are provided by Cys-207, Cys-216, Cys-219, and Cys-221. Residues 207-221 form a fe-S binding site A region; sequence CSKPGKKKRCKNCTC. [4Fe-4S] cluster-binding residues include Cys-265, Cys-268, Cys-276, and Cys-279. 2 consecutive short sequence motifs (cx2C motif) follow at residues 265 to 268 and 276 to 279; these read CGSC and CSGC. The fe-S binding site B stretch occupies residues 265-279; that stretch reads CGSCYLGDAFRCSGC.

It belongs to the anamorsin family. As to quaternary structure, monomer. Interacts with TAH18. Interacts with MIA40. [2Fe-2S] cluster serves as cofactor. Requires [4Fe-4S] cluster as cofactor.

Its subcellular location is the cytoplasm. It is found in the mitochondrion intermembrane space. In terms of biological role, component of the cytosolic iron-sulfur (Fe-S) protein assembly (CIA) machinery required for the maturation of extramitochondrial Fe-S proteins. Part of an electron transfer chain functioning in an early step of cytosolic Fe-S biogenesis, facilitating the de novo assembly of a [4Fe-4S] cluster on the scaffold complex CFD1-NBP35. Electrons are transferred to DRE2 from NADPH via the FAD- and FMN-containing protein TAH18. TAH18-DRE2 are also required for the assembly of the diferric tyrosyl radical cofactor of ribonucleotide reductase (RNR), probably by providing electrons for reduction during radical cofactor maturation in the catalytic small subunit RNR2. This Schizosaccharomyces japonicus (strain yFS275 / FY16936) (Fission yeast) protein is Fe-S cluster assembly protein dre2.